Consider the following 355-residue polypeptide: Protein MxiC (355 aa).

It is found in the secreted. Its subcellular location is the host cell. Its function is as follows. Necessary for the secretion of IPA invasins. The polypeptide is Protein MxiC (mxiC) (Shigella flexneri).